Here is a 551-residue protein sequence, read N- to C-terminus: MAFQDLITQIGCLGRFQILHLIFVLICFILVVPHTVLENFTAAIPSHRCWVPILDNNTMSDNNSRILSQDDLLRISIPMDSNLRPEKCRRYIQPQWDLLHLNGTFSTVTEPDTEPCVDGWVYDQSTFLSTTVTQWDLVCGSQTLNSVAKFIYMTGIFIGHLMGGHLSDKFGRKFIVTCGLLTLAVTETSVAFAPTFLIYCSLRFLTGISSSCIRTNSALLILEWTSPKFQAMVMALIFSAGGIGQVLLGVLAFGIRNWQHLQLAMSVPVFFLLIPTRWLSESARWLIITNKPQEGLKELIKVAHINGIKNSRDVLTLEVVKTTMKDELEAAETKPSPLVLFRTPNLRKRICLLSFVRCVSLISTVGLLINLQYLSNKVFLLQCLYGVVCTPANLLGNFSMNYMGRRTTQIIFMSVMGISILSITFLTQEMQIPRLVLASLGGAISSASLTSTAVLSNELVPTVIRATALGVIGIFGSAGAALSPLLMILMTYSASLPWIIYGVLPILSSLVVLLLPETRNQPLPDSIQDVENKRKSSREVKKDAVAKVTPF.

Transmembrane regions (helical) follow at residues 16-36 (FQILHLIFVLICFILVVPHTV), 146-166 (SVAKFIYMTGIFIGHLMGGHL), 174-194 (FIVTCGLLTLAVTETSVAFAP), 204-222 (FLTGISSSCIRTNSALLIL), 235-255 (ALIFSAGGIGQVLLGVLAFGI), 260-280 (HLQLAMSVPVFFLLIPTRWLS), 350-370 (ICLLSFVRCVSLISTVGLLIN), 378-398 (VFLLQCLYGVVCTPANLLGNF), 410-430 (IIFMSVMGISILSITFLTQEM), 435-455 (LVLASLGGAISSASLTSTAVL), 469-489 (LGVIGIFGSAGAALSPLLMIL), and 496-516 (LPWIIYGVLPILSSLVVLLLP). The segment at 524–551 (PDSIQDVENKRKSSREVKKDAVAKVTPF) is disordered. Residues 530 to 545 (VENKRKSSREVKKDAV) show a composition bias toward basic and acidic residues.

As to expression, localized to the kidney. Mainly expressed in the late segments of proximal tubules.

Its subcellular location is the cell membrane. It catalyses the reaction estrone 3-sulfate(out) + glutarate(in) = estrone 3-sulfate(in) + glutarate(out). The enzyme catalyses 17beta-estradiol 17-O-(beta-D-glucuronate)(out) + glutarate(in) = 17beta-estradiol 17-O-(beta-D-glucuronate)(in) + glutarate(out). The catalysed reaction is dehydroepiandrosterone 3-sulfate(out) + glutarate(in) = dehydroepiandrosterone 3-sulfate(in) + glutarate(out). Functionally, renal transmembrane organic anion/dicarboxylate exchanger that participates in the reabsorption of conjugated steroids, as well as bile acids, driven by an outward gradient of dicarboxylates such as glutarate or succinate. Transports estrone 3-sulfate and estradiol-17-glucuronide (17beta-estradiol 17-O-(beta-D-glucuronate)), but not androstanediol glucuronide (5alpha-androstane-3alpha,17beta-diol 3-O-(beta-D-glucuronate)), nor taurocholate. Prefers sulfate conjugates of steroids rather than glucuronide conjugates. This chain is Steroid transmembrane transporter SLC22A24, found in Rattus norvegicus (Rat).